The following is a 323-amino-acid chain: Prostaglandin F synthase 2 (323 aa).

Residues 20-24 (GFGTY) and Asp50 each bind NADP(+). The active-site Proton donor is the Tyr55. His117 is a binding site for substrate. NADP(+) contacts are provided by residues 166–167 (SN), Gln190, 216–221 (YAALGA), and 270–280 (KSFNKKRIKEN).

Belongs to the aldo/keto reductase family. Monomer.

It is found in the cytoplasm. It carries out the reaction prostaglandin F2alpha + NADP(+) = prostaglandin D2 + NADPH + H(+). The protein operates within lipid metabolism; prostaglandin biosynthesis. Catalyzes the reduction of PGD(2) and PGH(2) to PGF(2 alpha) and a stereoisomer, respectively. It has a broad substrate specificity and also reduces other carbonyl compounds. This chain is Prostaglandin F synthase 2, found in Bos taurus (Bovine).